We begin with the raw amino-acid sequence, 479 residues long: ATP synthase subunit beta (479 aa).

158–165 (GGAGLGKT) contributes to the ATP binding site.

It belongs to the ATPase alpha/beta chains family. F-type ATPases have 2 components, CF(1) - the catalytic core - and CF(0) - the membrane proton channel. CF(1) has five subunits: alpha(3), beta(3), gamma(1), delta(1), epsilon(1). CF(0) has three main subunits: a(1), b(2) and c(9-12). The alpha and beta chains form an alternating ring which encloses part of the gamma chain. CF(1) is attached to CF(0) by a central stalk formed by the gamma and epsilon chains, while a peripheral stalk is formed by the delta and b chains.

The protein localises to the cell inner membrane. It carries out the reaction ATP + H2O + 4 H(+)(in) = ADP + phosphate + 5 H(+)(out). Its function is as follows. Produces ATP from ADP in the presence of a proton gradient across the membrane. The catalytic sites are hosted primarily by the beta subunits. In Rhodopirellula baltica (strain DSM 10527 / NCIMB 13988 / SH1), this protein is ATP synthase subunit beta.